A 90-amino-acid chain; its full sequence is uncharacterized protein (90 aa).

The chain crosses the membrane as a helical span at residues 15–34 (HVLAISTFIATAAVASYFTT). Positions 34–65 (TKPKTKNEGKNSSALSQQKSGESSNSDAMGKD) are disordered. The segment covering 43–60 (KNSSALSQQKSGESSNSD) has biased composition (polar residues). N-linked (GlcNAc...) asparagine glycosylation is present at Asn44.

Its subcellular location is the mitochondrion membrane. This is an uncharacterized protein from Saccharomyces cerevisiae (strain ATCC 204508 / S288c) (Baker's yeast).